The primary structure comprises 155 residues: MPIRVIAKNKKAYFDYEILQSLESGIVLQGSEVKSIRAGRVNLKDSFIKIIRGEAFLFNAHISFLQTTYTHFKPNERRERKLLLHKKEIDKLFGSVSKESLSIVPLNIYFNQKNKIKLCIALVRGKKLHDKRESIKKKMLEREARAHMKSYGKKL.

This sequence belongs to the SmpB family.

The protein localises to the cytoplasm. Its function is as follows. Required for rescue of stalled ribosomes mediated by trans-translation. Binds to transfer-messenger RNA (tmRNA), required for stable association of tmRNA with ribosomes. tmRNA and SmpB together mimic tRNA shape, replacing the anticodon stem-loop with SmpB. tmRNA is encoded by the ssrA gene; the 2 termini fold to resemble tRNA(Ala) and it encodes a 'tag peptide', a short internal open reading frame. During trans-translation Ala-aminoacylated tmRNA acts like a tRNA, entering the A-site of stalled ribosomes, displacing the stalled mRNA. The ribosome then switches to translate the ORF on the tmRNA; the nascent peptide is terminated with the 'tag peptide' encoded by the tmRNA and targeted for degradation. The ribosome is freed to recommence translation, which seems to be the essential function of trans-translation. The sequence is that of SsrA-binding protein from Helicobacter hepaticus (strain ATCC 51449 / 3B1).